The chain runs to 533 residues: Na(+)/H(+) antiporter NhaB (533 aa).

10 helical membrane-spanning segments follow: residues 28 to 50 (FLII…VLVL), 67 to 87 (PGGL…SQVL), 96 to 116 (VLLL…LLLF), 131 to 165 (VSLM…FYSI), 254 to 274 (VPVL…GIFG), 316 to 336 (LIAG…SVII), 364 to 384 (LAVF…APVI), 396 to 416 (LVIF…VFVG), 454 to 474 (ATPN…APLI), and 481 to 501 (MVWM…MAIQ).

Belongs to the NhaB Na(+)/H(+) (TC 2.A.34) antiporter family.

The protein resides in the cell inner membrane. The enzyme catalyses 2 Na(+)(in) + 3 H(+)(out) = 2 Na(+)(out) + 3 H(+)(in). Na(+)/H(+) antiporter that extrudes sodium in exchange for external protons. In Shewanella baltica (strain OS195), this protein is Na(+)/H(+) antiporter NhaB.